A 628-amino-acid polypeptide reads, in one-letter code: Putative serine esterase Mb1866c (628 aa).

Residue Ser156 is the Acyl-ester intermediate of the active site. Active-site charge relay system residues include Asp322 and His350.

This sequence belongs to the CocE/NonD hydrolase family.

This chain is Putative serine esterase Mb1866c, found in Mycobacterium bovis (strain ATCC BAA-935 / AF2122/97).